We begin with the raw amino-acid sequence, 312 residues long: Olfactory receptor 2L2 (312 aa).

At 1 to 24 the chain is on the extracellular side; the sequence is MENYNQTSTDFILLGLFPQSRIGL. N5 carries N-linked (GlcNAc...) asparagine glycosylation. Residues 25–48 form a helical membrane-spanning segment; the sequence is FVFTLIFLIFLMALIGNLSMILLI. Residues 49 to 56 are Cytoplasmic-facing; sequence FLDIHLHT. The chain crosses the membrane as a helical span at residues 57-78; the sequence is PMYFLLSQLSLIDLNYISTIVP. At 79–99 the chain is on the extracellular side; sequence KMVYDFLYGNKSISFTGCGIQ. Residue N88 is glycosylated (N-linked (GlcNAc...) asparagine). An intrachain disulfide couples C96 to C188. A helical membrane pass occupies residues 100-119; that stretch reads SFFFLTLAVAEGLLLTSMAY. The Cytoplasmic portion of the chain corresponds to 120–138; sequence DRYVAICFPLHYPIRISKR. Residues 139-157 traverse the membrane as a helical segment; that stretch reads VCVMMITGSWMISSINSCA. At 158-194 the chain is on the extracellular side; sequence HTVYALCIPYCKSRAINHFFCDVPAMLTLACTDTWVY. A helical membrane pass occupies residues 195-218; sequence ESTVFLSSTIFLVLPFTGIACSYG. Residues 219 to 235 lie on the Cytoplasmic side of the membrane; the sequence is RVLLAVYRMHSAEGRKK. The helical transmembrane segment at 236-258 threads the bilayer; sequence AYSTCSTHLTVVSFYYAPFAYTY. Topologically, residues 259-271 are extracellular; it reads VRPRSLRSPTEDK. Residues 272–291 traverse the membrane as a helical segment; sequence ILAVFYTILTPMLNPIIYSL. Residues 292–312 are Cytoplasmic-facing; it reads RNKEVMGALTQVIQKIFSVKM.

Belongs to the G-protein coupled receptor 1 family.

The protein resides in the cell membrane. In terms of biological role, odorant receptor. This Homo sapiens (Human) protein is Olfactory receptor 2L2 (OR2L2).